The sequence spans 201 residues: Small ribosomal subunit protein uS4 (201 aa).

The segment at 1 to 42 (MARYTGPVTRKSRRLGTDLVGGDQSFEKRPYPPGQHGRARIK) is disordered. The region spanning 91-157 (SRLDNVVYRA…VPFQIARETA (67 aa)) is the S4 RNA-binding domain.

It belongs to the universal ribosomal protein uS4 family. As to quaternary structure, part of the 30S ribosomal subunit. Contacts protein S5. The interaction surface between S4 and S5 is involved in control of translational fidelity.

Functionally, one of the primary rRNA binding proteins, it binds directly to 16S rRNA where it nucleates assembly of the body of the 30S subunit. Its function is as follows. With S5 and S12 plays an important role in translational accuracy. The polypeptide is Small ribosomal subunit protein uS4 (Mycobacterium ulcerans (strain Agy99)).